The primary structure comprises 326 residues: Ribose-phosphate pyrophosphokinase 4 (326 aa).

Asp140, His142, His151, and Asp155 together coordinate Mg(2+).

Belongs to the ribose-phosphate pyrophosphokinase family.

It is found in the cytoplasm. It catalyses the reaction D-ribose 5-phosphate + ATP = 5-phospho-alpha-D-ribose 1-diphosphate + AMP + H(+). It participates in metabolic intermediate biosynthesis; 5-phospho-alpha-D-ribose 1-diphosphate biosynthesis; 5-phospho-alpha-D-ribose 1-diphosphate from D-ribose 5-phosphate (route I): step 1/1. Its function is as follows. 5-phosphoribose 1-diphosphate synthase involved in nucleotide, histidine, and tryptophan biosynthesis. Active in heteromultimeric complexes with other 5-phosphoribose 1-diphosphate synthases (PRS2, PRS3, PRS4 and PRS5). The polypeptide is Ribose-phosphate pyrophosphokinase 4 (PRS4) (Saccharomyces cerevisiae (strain ATCC 204508 / S288c) (Baker's yeast)).